We begin with the raw amino-acid sequence, 152 residues long: Probable histone H2A.3 (152 aa).

2 disordered regions span residues 1–25 (MDASTKTTKKGAGGRKGGGPRKKSV) and 129–152 (KTERANTGGKEPKTTKAGKSPKKA). Basic residues predominate over residues 7-25 (TTKKGAGGRKGGGPRKKSV). Basic and acidic residues predominate over residues 129-142 (KTERANTGGKEPKT). Residues 148 to 151 (SPKK) carry the SPKK motif motif.

Belongs to the histone H2A family. The nucleosome is a histone octamer containing two molecules each of H2A, H2B, H3 and H4 assembled in one H3-H4 heterotetramer and two H2A-H2B heterodimers. The octamer wraps approximately 147 bp of DNA.

It localises to the nucleus. It is found in the chromosome. Core component of nucleosome. Nucleosomes wrap and compact DNA into chromatin, limiting DNA accessibility to the cellular machineries which require DNA as a template. Histones thereby play a central role in transcription regulation, DNA repair, DNA replication and chromosomal stability. DNA accessibility is regulated via a complex set of post-translational modifications of histones, also called histone code, and nucleosome remodeling. The protein is Probable histone H2A.3 of Medicago truncatula (Barrel medic).